A 218-amino-acid polypeptide reads, in one-letter code: Ribose-5-phosphate isomerase A (218 aa).

Substrate-binding positions include 28–31 (TGST), 81–84 (DGAD), and 94–97 (KGGG). Residue E103 is the Proton acceptor of the active site. A substrate-binding site is contributed by K121.

The protein belongs to the ribose 5-phosphate isomerase family. As to quaternary structure, homodimer.

The enzyme catalyses aldehydo-D-ribose 5-phosphate = D-ribulose 5-phosphate. It participates in carbohydrate degradation; pentose phosphate pathway; D-ribose 5-phosphate from D-ribulose 5-phosphate (non-oxidative stage): step 1/1. In terms of biological role, catalyzes the reversible conversion of ribose-5-phosphate to ribulose 5-phosphate. The chain is Ribose-5-phosphate isomerase A from Psychromonas ingrahamii (strain DSM 17664 / CCUG 51855 / 37).